The following is a 172-amino-acid chain: Adenine phosphoribosyltransferase (172 aa).

Belongs to the purine/pyrimidine phosphoribosyltransferase family. In terms of assembly, homodimer.

It is found in the cytoplasm. The catalysed reaction is AMP + diphosphate = 5-phospho-alpha-D-ribose 1-diphosphate + adenine. Its pathway is purine metabolism; AMP biosynthesis via salvage pathway; AMP from adenine: step 1/1. Functionally, catalyzes a salvage reaction resulting in the formation of AMP, that is energically less costly than de novo synthesis. This Prochlorococcus marinus (strain MIT 9303) protein is Adenine phosphoribosyltransferase.